A 689-amino-acid chain; its full sequence is Collagen alpha-2(IX) chain (689 aa).

A signal peptide spans 1 to 23 (MAAATASPRSLLVLLQVVVLALA). Positions 26–518 (RGPPGERGPP…QPGRQGVEGR (493 aa)) are disordered. A triple-helical region 4 (COL4) region spans residues 27–163 (GPPGERGPPG…PGKPGRPGTI (137 aa)). Positions 31–43 (ERGPPGPPGPPGV) are enriched in pro residues. Residues 44–56 (PGSDGIDGDNGPP) are compositionally biased toward low complexity. Pro residues-rich tracts occupy residues 106 to 127 (LPGP…PGPV) and 144 to 157 (PDGP…PGKP). The residue at position 160 (proline 160) is a 4-hydroxyproline. Residues 164-180 (QGLEGSADFLCPTNCPP) are nonhelical region 4 (NC4). The O-linked (Xyl...) (glycosaminoglycan) serine glycan is linked to serine 169. The tract at residues 181 to 519 (GMKGPPGLQG…PGRQGVEGRD (339 aa)) is triple-helical region 3 (COL3). A 5-hydroxylysine modification is found at lysine 183. An O-linked (Gal...) hydroxylysine glycan is attached at lysine 183. The segment covering 343 to 352 (GTKGGPGDQG) has biased composition (gly residues). Composition is skewed to low complexity over residues 353–366 (EPGP…SGPP) and 393–413 (RGPV…EQGP). The tract at residues 520–549 (ATDQHIVDVALKMLQEQLAEVAVSAKREAL) is nonhelical region 3 (NC3). A triple-helical region 2 (COL2) region spans residues 550-632 (GAVGMMGPPG…PGLPGRPGQA (83 aa)). The tract at residues 554-663 (MMGPPGPPGP…LPGPVGLPGF (110 aa)) is disordered. Residues 557–566 (PPGPPGPPGY) show a composition bias toward pro residues. Positions 599–611 (KRGEKGDPGEVGR) are enriched in basic and acidic residues. The interval 633-634 (IN) is nonhelical region 2 (NC2). The tract at residues 635 to 664 (GKDGDRGSPGAPGEAGRPGLPGPVGLPGFC) is triple-helical region 1 (COL1). The nonhelical region 1 (NC1) stretch occupies residues 665-689 (EPAACLGASAYASARLTEPGSIKGP).

The protein belongs to the fibril-associated collagens with interrupted helices (FACIT) family. As to quaternary structure, heterotrimer of an alpha 1(IX), an alpha 2(IX) and an alpha 3(IX) chain. The chains are linked to each other by interchain disulfide bonds. Trimers are also cross-linked via hydroxylysines. Covalently linked to the telopeptides of type II collagen by lysine-derived cross-links. In terms of processing, prolines at the third position of the tripeptide repeating unit (G-X-Y) are hydroxylated in some or all of the chains.

Its subcellular location is the secreted. It localises to the extracellular space. The protein resides in the extracellular matrix. Functionally, structural component of hyaline cartilage and vitreous of the eye. In Homo sapiens (Human), this protein is Collagen alpha-2(IX) chain.